A 297-amino-acid chain; its full sequence is Acetylglutamate kinase (297 aa).

Residues 72–73, arginine 94, and asparagine 187 contribute to the substrate site; that span reads GG.

It belongs to the acetylglutamate kinase family. ArgB subfamily.

It is found in the cytoplasm. It catalyses the reaction N-acetyl-L-glutamate + ATP = N-acetyl-L-glutamyl 5-phosphate + ADP. It participates in amino-acid biosynthesis; L-arginine biosynthesis; N(2)-acetyl-L-ornithine from L-glutamate: step 2/4. Catalyzes the ATP-dependent phosphorylation of N-acetyl-L-glutamate. This chain is Acetylglutamate kinase, found in Synechocystis sp. (strain ATCC 27184 / PCC 6803 / Kazusa).